The following is a 394-amino-acid chain: Ornithine aminotransferase 1 (394 aa).

At Lys252 the chain carries N6-(pyridoxal phosphate)lysine.

Belongs to the class-III pyridoxal-phosphate-dependent aminotransferase family. OAT subfamily. Pyridoxal 5'-phosphate serves as cofactor.

The protein resides in the cytoplasm. The catalysed reaction is a 2-oxocarboxylate + L-ornithine = L-glutamate 5-semialdehyde + an L-alpha-amino acid. It participates in amino-acid biosynthesis; L-proline biosynthesis; L-glutamate 5-semialdehyde from L-ornithine: step 1/1. Its function is as follows. Catalyzes the interconversion of ornithine to glutamate semialdehyde. In Staphylococcus aureus (strain Mu50 / ATCC 700699), this protein is Ornithine aminotransferase 1.